The chain runs to 199 residues: Large ribosomal subunit protein bL9 (199 aa).

The interval 169–199 is disordered; sequence TGGFTEEYDPNAEPGEIPTELLEGGEEAAEA.

It belongs to the bacterial ribosomal protein bL9 family.

Functionally, binds to the 23S rRNA. The protein is Large ribosomal subunit protein bL9 of Novosphingobium aromaticivorans (strain ATCC 700278 / DSM 12444 / CCUG 56034 / CIP 105152 / NBRC 16084 / F199).